The sequence spans 435 residues: Chromosomal replication initiator protein DnaA (435 aa).

Residues 1–70 (MNIGEKILLL…KHLFEIQNSI (70 aa)) form a domain I, interacts with DnaA modulators region. Positions 70–98 (IKVDVSILLKNQVESKKAEQKSVQKQQHS) are domain II. The domain III, AAA+ region stretch occupies residues 99–313 (LLNPSHTFEN…GILSKLHAYS (215 aa)). The ATP site is built by Gly-143, Gly-145, Lys-146, and Thr-147. Residues 314-435 (QLMHVDIDLQ…ELTNKITSSS (122 aa)) form a domain IV, binds dsDNA region.

It belongs to the DnaA family. As to quaternary structure, oligomerizes as a right-handed, spiral filament on DNA at oriC.

The protein resides in the cytoplasm. Functionally, plays an essential role in the initiation and regulation of chromosomal replication. ATP-DnaA binds to the origin of replication (oriC) to initiate formation of the DNA replication initiation complex once per cell cycle. Binds the DnaA box (a 9 base pair repeat at the origin) and separates the double-stranded (ds)DNA. Forms a right-handed helical filament on oriC DNA; dsDNA binds to the exterior of the filament while single-stranded (ss)DNA is stabiized in the filament's interior. The ATP-DnaA-oriC complex binds and stabilizes one strand of the AT-rich DNA unwinding element (DUE), permitting loading of DNA polymerase. After initiation quickly degrades to an ADP-DnaA complex that is not apt for DNA replication. Binds acidic phospholipids. This Sulfurimonas denitrificans (strain ATCC 33889 / DSM 1251) (Thiomicrospira denitrificans (strain ATCC 33889 / DSM 1251)) protein is Chromosomal replication initiator protein DnaA.